Reading from the N-terminus, the 198-residue chain is Glycerol-3-phosphate acyltransferase (198 aa).

5 helical membrane passes run 2 to 22 (IIVI…TGYL), 55 to 75 (MITQ…CMLI), 88 to 108 (YLSI…FLGF), 118 to 138 (VGAF…VYFV), and 162 to 182 (IALR…GLLI).

Belongs to the PlsY family. As to quaternary structure, probably interacts with PlsX.

Its subcellular location is the cell membrane. The enzyme catalyses an acyl phosphate + sn-glycerol 3-phosphate = a 1-acyl-sn-glycero-3-phosphate + phosphate. The protein operates within lipid metabolism; phospholipid metabolism. Catalyzes the transfer of an acyl group from acyl-phosphate (acyl-PO(4)) to glycerol-3-phosphate (G3P) to form lysophosphatidic acid (LPA). This enzyme utilizes acyl-phosphate as fatty acyl donor, but not acyl-CoA or acyl-ACP. This is Glycerol-3-phosphate acyltransferase from Clostridium acetobutylicum (strain ATCC 824 / DSM 792 / JCM 1419 / IAM 19013 / LMG 5710 / NBRC 13948 / NRRL B-527 / VKM B-1787 / 2291 / W).